Reading from the N-terminus, the 609-residue chain is Elongation factor 4 (609 aa).

In terms of domain architecture, tr-type G spans 11–193; that stretch reads ERIRNFSIIA…QIVEKIPAPS (183 aa). GTP contacts are provided by residues 23–28 and 140–143; these read DHGKST and NKID.

The protein belongs to the TRAFAC class translation factor GTPase superfamily. Classic translation factor GTPase family. LepA subfamily.

It is found in the cell membrane. The catalysed reaction is GTP + H2O = GDP + phosphate + H(+). Functionally, required for accurate and efficient protein synthesis under certain stress conditions. May act as a fidelity factor of the translation reaction, by catalyzing a one-codon backward translocation of tRNAs on improperly translocated ribosomes. Back-translocation proceeds from a post-translocation (POST) complex to a pre-translocation (PRE) complex, thus giving elongation factor G a second chance to translocate the tRNAs correctly. Binds to ribosomes in a GTP-dependent manner. The sequence is that of Elongation factor 4 from Geobacillus thermodenitrificans (strain NG80-2).